Here is a 433-residue protein sequence, read N- to C-terminus: V-type ATP synthase beta chain (433 aa).

The protein belongs to the ATPase alpha/beta chains family.

In terms of biological role, produces ATP from ADP in the presence of a proton gradient across the membrane. The V-type beta chain is a regulatory subunit. The polypeptide is V-type ATP synthase beta chain (Borrelia turicatae (strain 91E135)).